The following is a 146-amino-acid chain: Hemoglobin subunit beta (146 aa).

Residue V1 is modified to N-acetylvaline. One can recognise a Globin domain in the interval 2 to 146; sequence HLTDAEKNLV…VANALAHKYH (145 aa). Residue H63 participates in heme b binding. The residue at position 82 (K82) is an N6-acetyllysine. Residue H92 coordinates heme b. The residue at position 93 (C93) is an S-nitrosocysteine. K144 carries the post-translational modification N6-acetyllysine.

Belongs to the globin family. As to quaternary structure, heterotetramer of two alpha chains and two beta chains. Red blood cells.

Its function is as follows. Involved in oxygen transport from the lung to the various peripheral tissues. In Mesocricetus brandti (Brandt's hamster), this protein is Hemoglobin subunit beta (HBB).